We begin with the raw amino-acid sequence, 119 residues long: Large ribosomal subunit protein P3 (119 aa).

A disordered region spans residues 81–119; sequence GAAAGAASGGAAAEAPKAEEKKEEEKEESEDDLGFSLFD. The segment covering 84 to 95 has biased composition (low complexity); it reads AGAASGGAAAEA.

Belongs to the eukaryotic ribosomal protein P1/P2 family. In terms of processing, phosphorylated.

Plays an important role in the elongation step of protein synthesis. The sequence is that of Large ribosomal subunit protein P3 from Oryza sativa subsp. japonica (Rice).